Reading from the N-terminus, the 95-residue chain is Aspartyl/glutamyl-tRNA(Asn/Gln) amidotransferase subunit C (95 aa).

It belongs to the GatC family. In terms of assembly, heterotrimer of A, B and C subunits.

The catalysed reaction is L-glutamyl-tRNA(Gln) + L-glutamine + ATP + H2O = L-glutaminyl-tRNA(Gln) + L-glutamate + ADP + phosphate + H(+). The enzyme catalyses L-aspartyl-tRNA(Asn) + L-glutamine + ATP + H2O = L-asparaginyl-tRNA(Asn) + L-glutamate + ADP + phosphate + 2 H(+). In terms of biological role, allows the formation of correctly charged Asn-tRNA(Asn) or Gln-tRNA(Gln) through the transamidation of misacylated Asp-tRNA(Asn) or Glu-tRNA(Gln) in organisms which lack either or both of asparaginyl-tRNA or glutaminyl-tRNA synthetases. The reaction takes place in the presence of glutamine and ATP through an activated phospho-Asp-tRNA(Asn) or phospho-Glu-tRNA(Gln). The sequence is that of Aspartyl/glutamyl-tRNA(Asn/Gln) amidotransferase subunit C from Gluconacetobacter diazotrophicus (strain ATCC 49037 / DSM 5601 / CCUG 37298 / CIP 103539 / LMG 7603 / PAl5).